Consider the following 709-residue polypeptide: Heme/hemopexin utilization protein C (709 aa).

Positions 1–21 (MRFSKLSLAITTTLVTANALA) are cleaved as a signal peptide. Residues 36–147 (DPSRFTYTPQ…LGGVVAMRTP (112 aa)) enclose the TBDR plug domain. One can recognise a TBDR beta-barrel domain in the interval 158–709 (KFGVKIRQGY…NAKISAVYSF (552 aa)). A TonB C-terminal box motif is present at residues 692 to 709 (SLMEGTGRNAKISAVYSF).

This sequence belongs to the TonB-dependent receptor family.

It is found in the cell outer membrane. Required for utilization of free heme at low concentrations. The chain is Heme/hemopexin utilization protein C (hxuC) from Haemophilus influenzae (strain 86-028NP).